The primary structure comprises 424 residues: MKGRVRIRGIYATALTSIFSSLSYEIVQQSVEIAERFMREVNNLPADITIKDFEYDRGKIIVMGNGTIEEDLHDVFKYSFHWKSPIKLYSVIEADESCTYGNFKVEPCLEEGIVIKPPYDGKIVLSETKAVSKYAMVWRGKGVTTFSEHINNEGERLRLLTLSSPLNRKGYNVKWRSNAKYATLNELKEDLERLVLRYENREFRDQGEDFYLITLSLPDKLHLDEVRKSIVNTVKYHHMLKLSYNREVDSLEKDKEGSPVKLLEALISDFMKIEHIKADGKAIYLRGGKVIEKEVNNDGYRITLRREINGNGVLDGIGKRIENGDYDIVEYNSDKWYQIHRYYSGIDNSLKGIYINISTPPELLKGKIRYLDLEIDIAIRDSEIIVLDEDELNKKSIYMHSSLVNKAKEVANYLIDCIQQNKLI.

This sequence belongs to the FAU-1 family.

In terms of biological role, probable RNase involved in rRNA stability through maturation and/or degradation of precursor rRNAs. Binds to RNA in loop regions with AU-rich sequences. The protein is Probable ribonuclease FAU-1 of Saccharolobus islandicus (strain L.S.2.15 / Lassen #1) (Sulfolobus islandicus).